The sequence spans 107 residues: Early E3A 12.5 kDa protein (107 aa).

It belongs to the adenoviridae E3A-2 family.

Functionally, not yet known. This Human adenovirus C serotype 5 (HAdV-5) protein is Early E3A 12.5 kDa protein.